The sequence spans 249 residues: MTHQPQQSPQFFLTAPSPCPYLEGQQERKVFTHLVGDKANEINDLLTQGGFRRSRNIAYRPACEVCRACISVRILAGEFEMTRNMRRVWSQNRDLIGRVHKAQPSTEQYALFRDYLDARHRSGGMSDMTVLDYAMMIEDTHVNTQIIEYRRRGPDSFMSAKGDGELIAVALTDVMADGLSMVYSFFLPHMQERSLGTYMILDHIERARAAGLPHVYLGYWVEGSRKMQYKIRFTPQEHLGPRGWQRFEG.

Belongs to the R-transferase family. Bpt subfamily.

It is found in the cytoplasm. It carries out the reaction N-terminal L-glutamyl-[protein] + L-leucyl-tRNA(Leu) = N-terminal L-leucyl-L-glutamyl-[protein] + tRNA(Leu) + H(+). The catalysed reaction is N-terminal L-aspartyl-[protein] + L-leucyl-tRNA(Leu) = N-terminal L-leucyl-L-aspartyl-[protein] + tRNA(Leu) + H(+). Its function is as follows. Functions in the N-end rule pathway of protein degradation where it conjugates Leu from its aminoacyl-tRNA to the N-termini of proteins containing an N-terminal aspartate or glutamate. The sequence is that of Aspartate/glutamate leucyltransferase from Brucella abortus (strain S19).